The primary structure comprises 210 residues: ATP-dependent dethiobiotin synthetase BioD (210 aa).

13–18 (DVGKTV) is an ATP binding site. A Mg(2+)-binding site is contributed by Thr-17. Lys-33 is an active-site residue. The Mg(2+) site is built by Arg-47 and Glu-101. Residues 101-104 (EGAG) and 185-187 (PPL) each bind ATP.

The protein belongs to the dethiobiotin synthetase family. In terms of assembly, homodimer. It depends on Mg(2+) as a cofactor.

The protein resides in the cytoplasm. The catalysed reaction is (7R,8S)-7,8-diammoniononanoate + CO2 + ATP = (4R,5S)-dethiobiotin + ADP + phosphate + 3 H(+). It functions in the pathway cofactor biosynthesis; biotin biosynthesis; biotin from 7,8-diaminononanoate: step 1/2. Its function is as follows. Catalyzes a mechanistically unusual reaction, the ATP-dependent insertion of CO2 between the N7 and N8 nitrogen atoms of 7,8-diaminopelargonic acid (DAPA, also called 7,8-diammoniononanoate) to form a ureido ring. The polypeptide is ATP-dependent dethiobiotin synthetase BioD (Afipia carboxidovorans (strain ATCC 49405 / DSM 1227 / KCTC 32145 / OM5) (Oligotropha carboxidovorans)).